Reading from the N-terminus, the 468-residue chain is UDP-N-acetylmuramate--L-alanine ligase (468 aa).

An ATP-binding site is contributed by 121-127 (GSHGKTT).

This sequence belongs to the MurCDEF family.

It is found in the cytoplasm. The enzyme catalyses UDP-N-acetyl-alpha-D-muramate + L-alanine + ATP = UDP-N-acetyl-alpha-D-muramoyl-L-alanine + ADP + phosphate + H(+). The protein operates within cell wall biogenesis; peptidoglycan biosynthesis. Functionally, cell wall formation. The chain is UDP-N-acetylmuramate--L-alanine ligase from Borrelia garinii subsp. bavariensis (strain ATCC BAA-2496 / DSM 23469 / PBi) (Borreliella bavariensis).